The chain runs to 113 residues: Colipase (113 aa).

A signal peptide spans 1 to 18; that stretch reads MEKVLVLLLVSLLAVAYA. Residues 19 to 23 constitute a propeptide, enterostatin, activation peptide; the sequence is APGPR. 5 cysteine pairs are disulfide-bonded: cysteine 35–cysteine 46, cysteine 41–cysteine 57, cysteine 45–cysteine 79, cysteine 67–cysteine 87, and cysteine 81–cysteine 105.

It belongs to the colipase family. As to quaternary structure, forms a 1:1 stoichiometric complex with pancreatic lipase. Expressed by the pancreas.

It localises to the secreted. Its function is as follows. Colipase is a cofactor of pancreatic lipase. It allows the lipase to anchor itself to the lipid-water interface. Without colipase the enzyme is washed off by bile salts, which have an inhibitory effect on the lipase. In terms of biological role, enterostatin has a biological activity as a satiety signal. The sequence is that of Colipase from Mus musculus (Mouse).